Here is a 329-residue protein sequence, read N- to C-terminus: Acetoacetyl CoA synthase NphT7 (329 aa).

Active-site residues include Cys-115, His-256, and Asn-286.

It belongs to the thiolase-like superfamily. FabH family. As to quaternary structure, homodimer.

It localises to the cytoplasm. The catalysed reaction is malonyl-CoA + acetyl-CoA + H(+) = acetoacetyl-CoA + CO2 + CoA. It participates in metabolic intermediate biosynthesis; (R)-mevalonate biosynthesis. In terms of biological role, catalyzes the condensation of acetyl-CoA and malonyl-CoA to form acetoacetyl-CoA and CoA. Does not accept malonyl-[acyl-carrier-protein] as a substrate. Can also convert malonyl-CoA into acetyl-CoA via decarboxylation of malonyl-CoA. This Streptomyces sp. (strain CL190) protein is Acetoacetyl CoA synthase NphT7 (nphT7).